The following is a 904-amino-acid chain: Transcription factor E2F7 (904 aa).

A disordered region spans residues 61–80; that stretch reads TPDRNPITPVKPVDRQPQVE. Ser96 is subject to Phosphoserine. A DNA-binding region spans residues 143 to 212; the sequence is RKQKSLGLLC…VAKNQYGWHG (70 aa). Residues 252-269 show a composition bias toward basic and acidic residues; sequence GERRKDGSPDPRDPHLLD. Positions 252 to 283 are disordered; sequence GERRKDGSPDPRDPHLLDFSEADYPSSSANSR. The DNA-binding element occupies 283–368; the sequence is RKDKSLRIMS…GRKPAFKWIG (86 aa). Ser411 carries the post-translational modification Phosphoserine. The segment at 560 to 628 is disordered; it reads LSPESRSEED…VMPKKPSSST (69 aa). Ser833 carries the post-translational modification Phosphoserine. Residues 846 to 904 are disordered; the sequence is AEQSPAPATPKSIQRRHRETFFKTPGSLGDPVFRRKERNQSRNTSSAQRRLEISSSGPD. A compositionally biased stretch (polar residues) spans 886 to 904; sequence SRNTSSAQRRLEISSSGPD.

The protein belongs to the E2F/DP family. In terms of assembly, interacts with HIF1A. Homodimer and heterodimer: mainly forms homodimers and, to a lesser extent, heterodimers with E2F8. Dimerization is important for DNA-binding. Interacts with MN1. In terms of tissue distribution, widely expressed with highest levels in skin and thymus and very low levels in brain, muscle and stomach. Expressed in trophoblast giant cells throughout placenta development (at protein level).

The protein resides in the nucleus. Atypical E2F transcription factor that participates in various processes such as angiogenesis, polyploidization of specialized cells and DNA damage response. Mainly acts as a transcription repressor that binds DNA independently of DP proteins and specifically recognizes the E2 recognition site 5'-TTTC[CG]CGC-3'. Directly represses transcription of classical E2F transcription factors such as E2F1. Acts as a regulator of S-phase by recognizing and binding the E2-related site 5'-TTCCCGCC-3' and mediating repression of G1/S-regulated genes. Plays a key role in polyploidization of cells in placenta and liver by regulating the endocycle, probably by repressing genes promoting cytokinesis and antagonizing action of classical E2F proteins (E2F1, E2F2 and/or E2F3). Required for placental development by promoting polyploidization of trophoblast giant cells. Also involved in DNA damage response: up-regulated by p53/TP53 following genotoxic stress and acts as a downstream effector of p53/TP53-dependent repression by mediating repression of indirect p53/TP53 target genes involved in DNA replication. Acts as a promoter of sprouting angiogenesis, possibly by acting as a transcription activator: associates with HIF1A, recognizes and binds the VEGFA promoter, which is different from canonical E2 recognition site, and activates expression of the VEGFA gene. Acts as a negative regulator of keratinocyte differentiation. The polypeptide is Transcription factor E2F7 (E2f7) (Mus musculus (Mouse)).